The chain runs to 643 residues: Threonine--tRNA ligase (643 aa).

The TGS domain occupies 3–64 (DMINITFPDG…QEDGAVEIIT (62 aa)). Residues 245–542 (DHRKLGKELK…LIEEHKGALP (298 aa)) form a catalytic region. Zn(2+)-binding residues include Cys-338, His-389, and His-519.

The protein belongs to the class-II aminoacyl-tRNA synthetase family. Homodimer. Zn(2+) is required as a cofactor.

The protein resides in the cytoplasm. The catalysed reaction is tRNA(Thr) + L-threonine + ATP = L-threonyl-tRNA(Thr) + AMP + diphosphate + H(+). In terms of biological role, catalyzes the attachment of threonine to tRNA(Thr) in a two-step reaction: L-threonine is first activated by ATP to form Thr-AMP and then transferred to the acceptor end of tRNA(Thr). Also edits incorrectly charged L-seryl-tRNA(Thr). This chain is Threonine--tRNA ligase, found in Bacillus velezensis (strain DSM 23117 / BGSC 10A6 / LMG 26770 / FZB42) (Bacillus amyloliquefaciens subsp. plantarum).